The following is a 165-amino-acid chain: Small ribosomal subunit protein eS10 (165 aa).

Residues A92–Q165 form a disordered region. Positions S97 to R128 are enriched in basic and acidic residues. A compositionally biased stretch (low complexity) spans A142–R153. Residues G154–Q165 show a composition bias toward gly residues.

It belongs to the eukaryotic ribosomal protein eS10 family. In terms of assembly, component of the small ribosomal subunit.

The protein localises to the cytoplasm. It localises to the nucleus. It is found in the nucleolus. In terms of biological role, component of the 40S ribosomal subunit. The ribosome is a large ribonucleoprotein complex responsible for the synthesis of proteins in the cell. This is Small ribosomal subunit protein eS10 (rps10) from Xenopus laevis (African clawed frog).